Consider the following 92-residue polypeptide: Subtilisin inhibitor 1 (92 aa).

Polar residues predominate over residues 1–12 (QEQGTNPSQEQN). A disordered region spans residues 1–31 (QEQGTNPSQEQNVPLPRNYKQALETNTPTKT).

The protein belongs to the protease inhibitor I13 (potato type I serine protease inhibitor) family.

Functionally, inhibitor of subtilisin. The polypeptide is Subtilisin inhibitor 1 (Phaseolus angularis (Azuki bean)).